The primary structure comprises 284 residues: Shikimate dehydrogenase (NADP(+)) (284 aa).

Residues 20–22 and serine 67 each bind shikimate; that span reads SIS. Lysine 71 functions as the Proton acceptor in the catalytic mechanism. Residue aspartate 83 coordinates NADP(+). The shikimate site is built by asparagine 92 and aspartate 107. NADP(+)-binding positions include 129-133 and isoleucine 227; that span reads GAGGA. Residue tyrosine 229 coordinates shikimate. Glycine 250 contacts NADP(+).

Belongs to the shikimate dehydrogenase family. Homodimer.

It catalyses the reaction shikimate + NADP(+) = 3-dehydroshikimate + NADPH + H(+). Its pathway is metabolic intermediate biosynthesis; chorismate biosynthesis; chorismate from D-erythrose 4-phosphate and phosphoenolpyruvate: step 4/7. In terms of biological role, involved in the biosynthesis of the chorismate, which leads to the biosynthesis of aromatic amino acids. Catalyzes the reversible NADPH linked reduction of 3-dehydroshikimate (DHSA) to yield shikimate (SA). The polypeptide is Shikimate dehydrogenase (NADP(+)) (Streptococcus pneumoniae (strain Taiwan19F-14)).